The primary structure comprises 758 residues: Probable C-mannosyltransferase DPY19L2 (758 aa).

Residues 1 to 58 (MRKQGVSSKRLQSSGRSQSKGRRGASLAREPEVEEEMEKSALGGGKLPRGSWRSSPGR) are disordered. Residues 1-107 (MRKQGVSSKR…ELQARRFSSR (107 aa)) lie on the Nuclear side of the membrane. Residues 7–18 (SSKRLQSSGRSQ) are compositionally biased toward low complexity. A helical transmembrane segment spans residues 108-128 (TTLGIAVFVAILHWLHLVTLF). Topologically, residues 129–194 (ENDRHFSHLS…INAIKRFHLY (66 aa)) are perinuclear space. A helical membrane pass occupies residues 195–215 (PEVIIASWYCTFMGIMNLFGL). Over 216–241 (ETKTCWNVTRIEPLNEVQSCEGLGDP) the chain is Nuclear. 2 consecutive transmembrane segments (helical) span residues 242-262 (ACFY…LFFM) and 263-283 (YGAY…CFFF). Residues 284-296 (NHGEATRVMWTPP) lie on the Nuclear side of the membrane. The chain crosses the membrane as a helical span at residues 297 to 317 (LRESFSYPFLVLQMCILTLIL). At 318-343 (RTSSNDRRPFIALCLSNVAFMLPWQF) the chain is on the perinuclear space side. A helical transmembrane segment spans residues 344–364 (AQFILFTQIASLFPMYVVGYI). The Nuclear segment spans residues 365-371 (EPSKFQK). Residues 372–392 (IIYMNMISVTLSFILMFGNSM) traverse the membrane as a helical segment. At 393-422 (YLSSYYSSSLLMTWAIILKRNEIQKLGVSK) the chain is on the perinuclear space side. The helical transmembrane segment at 423–443 (LNFWLIQGSAWWCGTIILKFL) threads the bilayer. Over 444 to 488 (TSKILGVSDHIRLSDLIAARILRYTDFDTLIYTCAPEFDFMEKAT) the chain is Nuclear. The chain crosses the membrane as a helical span at residues 489 to 509 (PLRYTKTLLLPVVMVITCFIF). Residues 510 to 533 (KKTVRDISYVLATNIYLRKQLLEH) are Perinuclear space-facing. The helical transmembrane segment at 534-554 (SELAFHTLQLLVFTALAILIM) threads the bilayer. Residues 555–758 (RLKMFLTPHM…NSVYRVLKVN (204 aa)) are Nuclear-facing.

This sequence belongs to the dpy-19 family. As to quaternary structure, interacts with FAM209. Widely expressed with high expression in testis. Not detectable in ejaculated sperm (at protein level).

Its subcellular location is the nucleus inner membrane. Its function is as follows. Probable C-mannosyltransferase that mediates C-mannosylation of tryptophan residues on target proteins. Required during spermatogenesis for sperm head elongation and acrosome formation. Also plays a role in acrosome attachment to the nuclear envelope. The chain is Probable C-mannosyltransferase DPY19L2 from Homo sapiens (Human).